The sequence spans 196 residues: Imidazoleglycerol-phosphate dehydratase (196 aa).

Belongs to the imidazoleglycerol-phosphate dehydratase family.

The protein resides in the cytoplasm. It carries out the reaction D-erythro-1-(imidazol-4-yl)glycerol 3-phosphate = 3-(imidazol-4-yl)-2-oxopropyl phosphate + H2O. The protein operates within amino-acid biosynthesis; L-histidine biosynthesis; L-histidine from 5-phospho-alpha-D-ribose 1-diphosphate: step 6/9. The protein is Imidazoleglycerol-phosphate dehydratase of Caulobacter sp. (strain K31).